The chain runs to 228 residues: Isoprenyl transferase (228 aa).

Asp-15 is an active-site residue. Asp-15 contributes to the Mg(2+) binding site. Residues 16-19 (GNGR), Trp-20, Arg-28, His-32, and 60-62 (STE) each bind substrate. Asn-63 acts as the Proton acceptor in catalysis. Substrate-binding positions include Trp-64, Arg-66, Arg-176, and 182 to 184 (RLS). Residue Glu-195 participates in Mg(2+) binding.

This sequence belongs to the UPP synthase family. Homodimer. Mg(2+) is required as a cofactor.

Functionally, catalyzes the condensation of isopentenyl diphosphate (IPP) with allylic pyrophosphates generating different type of terpenoids. This Wolinella succinogenes (strain ATCC 29543 / DSM 1740 / CCUG 13145 / JCM 31913 / LMG 7466 / NCTC 11488 / FDC 602W) (Vibrio succinogenes) protein is Isoprenyl transferase.